Here is a 436-residue protein sequence, read N- to C-terminus: Chorismate synthase, chloroplastic (436 aa).

The interval 1–24 (MASSSLTSKSILGSTKLGSSSLPS) is disordered. A chloroplast-targeting transit peptide spans 1-50 (MASSSLTSKSILGSTKLGSSSLPSELRRLSSPAVQISLRTQTRKNFQIQA).

It belongs to the chorismate synthase family. In terms of assembly, homotetramer. FMNH2 serves as cofactor.

The protein resides in the plastid. It localises to the chloroplast. The enzyme catalyses 5-O-(1-carboxyvinyl)-3-phosphoshikimate = chorismate + phosphate. The protein operates within metabolic intermediate biosynthesis; chorismate biosynthesis; chorismate from D-erythrose 4-phosphate and phosphoenolpyruvate: step 7/7. Functionally, catalyzes the last common step of the biosynthesis of aromatic amino acids, produced via the shikimic acid pathway. This is Chorismate synthase, chloroplastic (EMB1144) from Arabidopsis thaliana (Mouse-ear cress).